The chain runs to 358 residues: Guanidino acid hydrolase, mitochondrial (358 aa).

The transit peptide at 1–36 (MLRLLRSSWARGLGSGVATWRPSAGLFRPGCPGIRQ) directs the protein to the mitochondrion. Positions 31 to 56 (CPGIRQASGASDTPHHQSPSSESPVQ) are disordered. The segment covering 46-56 (HQSPSSESPVQ) has biased composition (low complexity). Mn(2+)-binding residues include Q168 and H193. Residue K199 is modified to N6-acetyllysine. K223 carries the N6-acetyllysine; alternate modification. N6-succinyllysine; alternate is present on K223. D284 is a Mn(2+) binding site.

Belongs to the arginase family. Agmatinase subfamily. Mn(2+) serves as cofactor. Detected only in liver.

Its subcellular location is the mitochondrion. The enzyme catalyses 3-guanidinopropanoate + H2O = urea + beta-alanine. The catalysed reaction is 4-guanidinobutanoate + H2O = urea + 4-aminobutanoate. It carries out the reaction taurocyamine + H2O = urea + taurine. It catalyses the reaction L-arginine + H2O = urea + L-ornithine. It functions in the pathway nitrogen metabolism; urea cycle; L-ornithine and urea from L-arginine: step 1/1. Its function is as follows. Hydrolyzes linear guanidino acids to form urea and the corresponding amines. Displays specificity for substrates having a negatively charged head group and short chains including taurocyamine, guanidino propanoic and butanoic acids. May protect cells by detoxifying potentially harmful amounts of guanidino acids. Metabolizes L-arginine with low efficiency. In Mus musculus (Mouse), this protein is Guanidino acid hydrolase, mitochondrial (Agmat).